A 235-amino-acid chain; its full sequence is Orotidine 5'-phosphate decarboxylase (235 aa).

Residues Asp11, Lys33, 60-69, Thr119, Arg180, Gln189, Gly209, and Arg210 each bind substrate; that span reads DLKFHDIPNT. Lys62 acts as the Proton donor in catalysis.

This sequence belongs to the OMP decarboxylase family. Type 1 subfamily. As to quaternary structure, homodimer.

It catalyses the reaction orotidine 5'-phosphate + H(+) = UMP + CO2. Its pathway is pyrimidine metabolism; UMP biosynthesis via de novo pathway; UMP from orotate: step 2/2. Catalyzes the decarboxylation of orotidine 5'-monophosphate (OMP) to uridine 5'-monophosphate (UMP). The polypeptide is Orotidine 5'-phosphate decarboxylase (Alkalilimnicola ehrlichii (strain ATCC BAA-1101 / DSM 17681 / MLHE-1)).